The chain runs to 222 residues: Eukaryotic translation initiation factor 3 subunit K (222 aa).

The region spanning 46–208 (YDLEANLAVL…KIKTKNITEK (163 aa)) is the PCI domain.

This sequence belongs to the eIF-3 subunit K family. In terms of assembly, component of the eukaryotic translation initiation factor 3 (eIF-3) complex. The eIF-3 complex interacts with pix.

The protein resides in the cytoplasm. In terms of biological role, component of the eukaryotic translation initiation factor 3 (eIF-3) complex, which is involved in protein synthesis of a specialized repertoire of mRNAs and, together with other initiation factors, stimulates binding of mRNA and methionyl-tRNAi to the 40S ribosome. The eIF-3 complex specifically targets and initiates translation of a subset of mRNAs involved in cell proliferation. This Drosophila willistoni (Fruit fly) protein is Eukaryotic translation initiation factor 3 subunit K.